The chain runs to 207 residues: ATP-dependent Clp protease proteolytic subunit (207 aa).

Catalysis depends on Ser-111, which acts as the Nucleophile. His-136 is an active-site residue.

It belongs to the peptidase S14 family. As to quaternary structure, fourteen ClpP subunits assemble into 2 heptameric rings which stack back to back to give a disk-like structure with a central cavity, resembling the structure of eukaryotic proteasomes.

Its subcellular location is the cytoplasm. It carries out the reaction Hydrolysis of proteins to small peptides in the presence of ATP and magnesium. alpha-casein is the usual test substrate. In the absence of ATP, only oligopeptides shorter than five residues are hydrolyzed (such as succinyl-Leu-Tyr-|-NHMec, and Leu-Tyr-Leu-|-Tyr-Trp, in which cleavage of the -Tyr-|-Leu- and -Tyr-|-Trp bonds also occurs).. In terms of biological role, cleaves peptides in various proteins in a process that requires ATP hydrolysis. Has a chymotrypsin-like activity. Plays a major role in the degradation of misfolded proteins. The polypeptide is ATP-dependent Clp protease proteolytic subunit (Aliivibrio salmonicida (strain LFI1238) (Vibrio salmonicida (strain LFI1238))).